The following is a 217-amino-acid chain: CXXC-type zinc finger protein 4 (217 aa).

The disordered stretch occupies residues 1–20; the sequence is MHRNDSQRLGKPGGAPESLQ. Residues 122–163 form a CXXC-type zinc finger; that stretch reads AKKKRKRCGVCVPCKRLINCGVCSSCRNRKTGHQICKFRKCE. Zn(2+) is bound by residues C129, C132, C135, C141, C144, C147, C157, and C162.

The protein resides in the cytoplasm. Functionally, acts as a negative regulator of the Wnt signaling pathway required for anterior neural structure formation. Ectopic expression induces ventralization. Binds preferentially to DNA containing cytidine-phosphate-guanosine (CpG) dinucleotides over CpH (H=A, T, and C), hemimethylated-CpG and hemimethylated-hydroxymethyl-CpG. This chain is CXXC-type zinc finger protein 4 (cxxc4), found in Xenopus laevis (African clawed frog).